The chain runs to 400 residues: GTPase Obg (400 aa).

In terms of domain architecture, Obg spans 1-159 (MKFVDEVQIR…RTLKLELLLL (159 aa)). One can recognise an OBG-type G domain in the interval 160–333 (ADVGMLGLPN…VCYDILDLLD (174 aa)). Residues 166–173 (GLPNAGKS), 191–195 (FTTLV), 213–216 (DIPG), 283–286 (NKMD), and 314–316 (TAI) each bind GTP. Mg(2+)-binding residues include S173 and T193.

This sequence belongs to the TRAFAC class OBG-HflX-like GTPase superfamily. OBG GTPase family. Monomer. Requires Mg(2+) as cofactor.

Its subcellular location is the cytoplasm. Its function is as follows. An essential GTPase which binds GTP, GDP and possibly (p)ppGpp with moderate affinity, with high nucleotide exchange rates and a fairly low GTP hydrolysis rate. Plays a role in control of the cell cycle, stress response, ribosome biogenesis and in those bacteria that undergo differentiation, in morphogenesis control. This is GTPase Obg from Aeromonas hydrophila subsp. hydrophila (strain ATCC 7966 / DSM 30187 / BCRC 13018 / CCUG 14551 / JCM 1027 / KCTC 2358 / NCIMB 9240 / NCTC 8049).